Reading from the N-terminus, the 429-residue chain is MRSYEKSKAAFKEAQKLMPGGVNSPVRAFKSVDMDPIFMQRGKGSKIFDIDGNEYIDYVLSWGPLILGHTNDRVVESLKKVAENGTSFGASTEVENELAKLVIDRVPSVEIVRMVSSGTEATMSALRLARGYTGRNKILKFEGCYHGHGDSLLIKAGSGVATLGLPDSPGVPEGIAMNTITVPYNDLESVALAFREYGEDIAGVIVEPVAGNMGVVPPQEGFLQGLRDMTEQYGALLIFDEVMTGFRVDYNCAQGYFGVTPDLTCLGKVIGGGLPVGAYGGKADIMERIAPSGPIYQAGTLSGNPLAMTAGLETLQQLTPESYQEFVKKGDMLEEGISKAAAAHGIPHTFNRAGSMIGFFFTNEPVINYEAAKSSDLKLFAKYYKGMADAGVFLPPSQFEGLFLSTAHTMEDIENTIQAAEKVFQAISR.

At Lys268 the chain carries N6-(pyridoxal phosphate)lysine.

The protein belongs to the class-III pyridoxal-phosphate-dependent aminotransferase family. HemL subfamily. As to quaternary structure, homodimer. Pyridoxal 5'-phosphate serves as cofactor.

Its subcellular location is the cytoplasm. It catalyses the reaction (S)-4-amino-5-oxopentanoate = 5-aminolevulinate. Its pathway is porphyrin-containing compound metabolism; protoporphyrin-IX biosynthesis; 5-aminolevulinate from L-glutamyl-tRNA(Glu): step 2/2. This Bacillus velezensis (strain DSM 23117 / BGSC 10A6 / LMG 26770 / FZB42) (Bacillus amyloliquefaciens subsp. plantarum) protein is Glutamate-1-semialdehyde 2,1-aminomutase 2.